A 555-amino-acid polypeptide reads, in one-letter code: CTP synthase (555 aa).

The interval 1–271 (MVKRGKKTKY…DDKLAELFNI (271 aa)) is amidoligase domain. Ser-19 serves as a coordination point for CTP. Ser-19 is a UTP binding site. ATP contacts are provided by residues 20–25 (SLGKGL) and Asp-77. Mg(2+) contacts are provided by Asp-77 and Glu-145. CTP-binding positions include 152–154 (DIE), 192–197 (KTKPTQ), and Lys-228. Residues 192–197 (KTKPTQ) and Lys-228 each bind UTP. Residues 297 to 538 (RVGVVGKYVE…VHAAREQRDQ (242 aa)) form the Glutamine amidotransferase type-1 domain. Residue Gly-358 coordinates L-glutamine. The Nucleophile; for glutamine hydrolysis role is filled by Cys-385. Residues 386 to 389 (LGLQ), Glu-409, and Arg-466 each bind L-glutamine. Catalysis depends on residues His-511 and Glu-513.

The protein belongs to the CTP synthase family. In terms of assembly, homotetramer.

It catalyses the reaction UTP + L-glutamine + ATP + H2O = CTP + L-glutamate + ADP + phosphate + 2 H(+). It carries out the reaction L-glutamine + H2O = L-glutamate + NH4(+). The catalysed reaction is UTP + NH4(+) + ATP = CTP + ADP + phosphate + 2 H(+). The protein operates within pyrimidine metabolism; CTP biosynthesis via de novo pathway; CTP from UDP: step 2/2. Its activity is regulated as follows. Allosterically activated by GTP, when glutamine is the substrate; GTP has no effect on the reaction when ammonia is the substrate. The allosteric effector GTP functions by stabilizing the protein conformation that binds the tetrahedral intermediate(s) formed during glutamine hydrolysis. Inhibited by the product CTP, via allosteric rather than competitive inhibition. In terms of biological role, catalyzes the ATP-dependent amination of UTP to CTP with either L-glutamine or ammonia as the source of nitrogen. Regulates intracellular CTP levels through interactions with the four ribonucleotide triphosphates. The polypeptide is CTP synthase (Anaeromyxobacter sp. (strain Fw109-5)).